The sequence spans 372 residues: Protein phosphatase Mn(2+)-dependent 1K (372 aa).

Residues 1 to 29 constitute a mitochondrion transit peptide; the sequence is MLSAAFITLLRSGGNQVKKRVLLSSILLQ. A critical for association with the BCKDH complex region spans residues 46-61; that stretch reads RCSRFDPDGSGQPATW. A PPM-type phosphatase domain is found at 94-346; sequence NVGCASLIGK…DNSTAVVVPF (253 aa). 2 residues coordinate Mn(2+): Asp127 and Gly128. Ser248 is modified (phosphoserine). The Mn(2+) site is built by Asp298 and Asp337.

Belongs to the PP2C family. Monomer. Interacts with E1 and E2 components of the branched-chain alpha-ketoacid dehydrogenase (BCKDH) complex; this interaction requires colocalization in mitochondria. Interacts with BCKDHA but not with BCKDHB of the E1 component. Interacts with the 24-meric E2 core composed of DBT monomers with a 24:1 stoichiometry; the N-terminal region (residues 49-61) of PPM1K and C-terminal linker of the lipoyl domain of DBT (residues 145-160) are critical for this interaction, whereas the lipoyl prosthetic group is dispensable. Competes with BCKDK for binding to the E2 core; this interaction is modulated by branched-chain alpha-keto acids. At steady state, BCKDH holoenzyme preferentially binds BCKDK and BCKDHA is phosphorylated. In response to high levels of branched-chain alpha-keto acids, the inhibitory BCKDK is replaced by activating PPM1K leading to BCKDHA dephosphorylation and BCAA degradation. It depends on Mn(2+) as a cofactor. Highly expressed in the heart, kidney, brain and liver and to a lesser extent in testis, lung, spleen and adipose tissue. Very low amount in muscle (at protein level). Also expressed in the thymus (at protein level) and the diaphragm. Significantly reduced in hypertrophied hearts.

It is found in the mitochondrion matrix. The catalysed reaction is O-phospho-L-seryl-[3-methyl-2-oxobutanoate dehydrogenase] + H2O = L-seryl-[3-methyl-2-oxobutanoate dehydrogenase] + phosphate. It carries out the reaction O-phospho-L-seryl-[protein] + H2O = L-seryl-[protein] + phosphate. It participates in protein modification. Serine/threonine-protein phosphatase component of macronutrients metabolism. Forms a functional kinase and phosphatase pair with BCKDK, serving as a metabolic regulatory node that coordinates branched-chain amino acids (BCAAs) with glucose and lipid metabolism via two distinct phosphoprotein targets: mitochondrial BCKDHA subunit of the branched-chain alpha-ketoacid dehydrogenase (BCKDH) complex and cytosolic ACLY, a lipogenic enzyme of Krebs cycle. At high levels of branched-chain ketoacids, dephosphorylates and activates mitochondrial BCKDH complex, a multisubunit complex consisting of three multimeric components each involved in different steps of BCAA catabolism: E1 composed of BCKDHA and BCKDHB, E2 core composed of DBT monomers, and E3 composed of DLD monomers. Tightly associates with the E2 component of BCKDH complex and dephosphorylates BCKDHA on Ser-334. Regulates the reversible phosphorylation of ACLY in response to changes in cellular carbohydrate abundance such as occurs during fasting to feeding metabolic transition. At fasting state, appears to dephosphorylate ACLY on Ser-455 and inactivate it. Refeeding stimulates MLXIPL/ChREBP transcription factor, leading to increased BCKDK to PPM1K expression ratio, phosphorylation and activation of ACLY that ultimately results in the generation of malonyl-CoA and oxaloacetate immediate substrates of de novo lipogenesis and gluconeogenesis, respectively. Recognizes phosphosites having SxS or RxxS motifs and strictly depends on Mn(2+) ions for the phosphatase activity. Regulates Ca(2+)-induced opening of mitochondrial transition pore and apoptotic cell death. The protein is Protein phosphatase Mn(2+)-dependent 1K of Mus musculus (Mouse).